Consider the following 312-residue polypeptide: Malate dehydrogenase (312 aa).

Residues Gly7–Gly13 and Asp34 each bind NAD(+). Substrate is bound by residues Arg81 and Arg87. NAD(+) contacts are provided by residues Asn94 and Ile117–Asn119. Positions 119 and 153 each coordinate substrate. The active-site Proton acceptor is the His177. NAD(+) is bound at residue Met227.

This sequence belongs to the LDH/MDH superfamily. MDH type 1 family. In terms of assembly, homodimer.

The enzyme catalyses (S)-malate + NAD(+) = oxaloacetate + NADH + H(+). Catalyzes the reversible oxidation of malate to oxaloacetate. In Escherichia coli (strain SE11), this protein is Malate dehydrogenase.